Here is a 305-residue protein sequence, read N- to C-terminus: Pseudouridine-5'-phosphate glycosidase (305 aa).

The Proton donor role is filled by Glu-28. Substrate contacts are provided by Lys-89 and Val-109. Asp-141 contributes to the Mn(2+) binding site. 143-145 lines the substrate pocket; sequence SAD. Catalysis depends on Lys-162, which acts as the Nucleophile.

This sequence belongs to the pseudouridine-5'-phosphate glycosidase family. As to quaternary structure, homotrimer. Requires Mn(2+) as cofactor.

The enzyme catalyses D-ribose 5-phosphate + uracil = psi-UMP + H2O. Catalyzes the reversible cleavage of pseudouridine 5'-phosphate (PsiMP) to ribose 5-phosphate and uracil. Functions biologically in the cleavage direction, as part of a pseudouridine degradation pathway. This chain is Pseudouridine-5'-phosphate glycosidase, found in Dinoroseobacter shibae (strain DSM 16493 / NCIMB 14021 / DFL 12).